Consider the following 281-residue polypeptide: 2-C-methyl-D-erythritol 4-phosphate cytidylyltransferase (281 aa).

The protein belongs to the IspD/TarI cytidylyltransferase family. IspD subfamily.

It catalyses the reaction 2-C-methyl-D-erythritol 4-phosphate + CTP + H(+) = 4-CDP-2-C-methyl-D-erythritol + diphosphate. It participates in isoprenoid biosynthesis; isopentenyl diphosphate biosynthesis via DXP pathway; isopentenyl diphosphate from 1-deoxy-D-xylulose 5-phosphate: step 2/6. Catalyzes the formation of 4-diphosphocytidyl-2-C-methyl-D-erythritol from CTP and 2-C-methyl-D-erythritol 4-phosphate (MEP). This Psychrobacter arcticus (strain DSM 17307 / VKM B-2377 / 273-4) protein is 2-C-methyl-D-erythritol 4-phosphate cytidylyltransferase.